We begin with the raw amino-acid sequence, 422 residues long: 4-hydroxy-3-methylbut-2-en-1-yl diphosphate synthase (flavodoxin) (422 aa).

Cys-316, Cys-319, Cys-362, and Glu-369 together coordinate [4Fe-4S] cluster.

This sequence belongs to the IspG family. The cofactor is [4Fe-4S] cluster.

It carries out the reaction (2E)-4-hydroxy-3-methylbut-2-enyl diphosphate + oxidized [flavodoxin] + H2O + 2 H(+) = 2-C-methyl-D-erythritol 2,4-cyclic diphosphate + reduced [flavodoxin]. It participates in isoprenoid biosynthesis; isopentenyl diphosphate biosynthesis via DXP pathway; isopentenyl diphosphate from 1-deoxy-D-xylulose 5-phosphate: step 5/6. Its function is as follows. Converts 2C-methyl-D-erythritol 2,4-cyclodiphosphate (ME-2,4cPP) into 1-hydroxy-2-methyl-2-(E)-butenyl 4-diphosphate. The protein is 4-hydroxy-3-methylbut-2-en-1-yl diphosphate synthase (flavodoxin) of Ehrlichia ruminantium (strain Gardel).